A 217-amino-acid chain; its full sequence is T-complex protein 10A homolog 1 (217 aa).

Positions 1-26 are disordered; that stretch reads MLAGQLEARDPKEGTHPEDPCPGAGA. Residues 7–19 are compositionally biased toward basic and acidic residues; that stretch reads EARDPKEGTHPED. Residues 69 to 110 adopt a coiled-coil conformation; sequence ADVHGKLRSHIDALREQNMELREKLRALQLQRWKARKKSAAS. Residues 75–96 are leucine-zipper; sequence LRSHIDALREQNMELREKLRAL. Over residues 175–192 the composition is skewed to basic and acidic residues; sequence ERISSWKTPPQEKRDKSL. The segment at 175–217 is disordered; the sequence is ERISSWKTPPQEKRDKSLSRRRQDRRATPTGRPTPCAERRGGV.

The protein belongs to the TCP10 family. Self-associates (via leucine zipper). Interacts (via leucine zipper) with ZIPK/DAPK3 (via leucine zipper). Interacts with MAD4.

The protein resides in the nucleus. May be involved in transcriptional regulation. Has in vitro transcription inhibition activity. This chain is T-complex protein 10A homolog 1 (TCP10L), found in Pan troglodytes (Chimpanzee).